The primary structure comprises 999 residues: Sarcoplasmic/endoplasmic reticulum calcium ATPase 3 (999 aa).

Residue methionine 1 is modified to N-acetylmethionine. Topologically, residues 1–48 are cytoplasmic; sequence MEEAHLLSAADVLRRFSVTAEGGLSLEQVTDARERYGPNELPTEEGKS. The residue at position 17 (serine 17) is a Phosphoserine. A Phosphothreonine modification is found at threonine 19. Serine 25 is subject to Phosphoserine. The helical transmembrane segment at 49-69 threads the bilayer; that stretch reads LWELVVEQFEDLLVRILLLAA. Topologically, residues 70 to 89 are lumenal; the sequence is LVSFVLAWFEEGEETTTAFV. A helical transmembrane segment spans residues 90 to 110; sequence EPLVIMLILVANAIVGVWQER. Residues 111 to 253 are Cytoplasmic-facing; it reads NAESAIEALK…PERTPLQRKL (143 aa). Residues 254 to 273 traverse the membrane as a helical segment; that stretch reads DEFGRQLSHAISVICVAVWV. Topologically, residues 274–295 are lumenal; it reads INIGHFADPAHGGSWLRGAVYY. A helical membrane pass occupies residues 296-313; the sequence is FKIAVALAVAAIPEGLPA. 4 residues coordinate Ca(2+): valine 304, alanine 305, isoleucine 307, and glutamate 309. Over 314-757 the chain is Cytoplasmic; the sequence is VITTCLALGT…EEGRAIYNNM (444 aa). Aspartate 351 (4-aspartylphosphate intermediate) is an active-site residue. Residues aspartate 351 and threonine 353 each contribute to the Mg(2+) site. Threonine 353 serves as a coordination point for ATP. The interval 370 to 400 is interaction with phospholamban 1; sequence AEAEAGTCRLHEFTISGTTYTPEGEVRQGEQ. Threonine 415 is subject to Phosphothreonine. 7 residues coordinate ATP: glutamate 442, arginine 489, lysine 515, arginine 560, threonine 625, glycine 626, and aspartate 627. The residue at position 662 (serine 662) is a Phosphoserine. ATP-binding residues include arginine 678 and lysine 684. Aspartate 703 provides a ligand contact to Mg(2+). Asparagine 706 contacts ATP. The helical transmembrane segment at 758–777 threads the bilayer; it reads KQFIRYLISSNVGEVVCIFL. The Ca(2+) site is built by asparagine 768 and glutamate 771. Topologically, residues 778–787 are lumenal; the sequence is TAILGLPEAL. Residues 788 to 808 traverse the membrane as a helical segment; it reads IPVQLLWVNLVTDGLPATALG. The segment at 788-808 is interaction with phospholamban 2; it reads IPVQLLWVNLVTDGLPATALG. 3 residues coordinate Ca(2+): asparagine 796, threonine 799, and aspartate 800. Over 809–828 the chain is Cytoplasmic; the sequence is FNPPDLDIMEKPPRNPREAL. Residues 829 to 851 traverse the membrane as a helical segment; it reads ISGWLFFRYLAIGVYVGLATVAA. Topologically, residues 852–897 are lumenal; the sequence is ATWWFLYDTEGPQVTFYQLRNFLKCSEDNPLFAGIDCKVFESRFPT. The helical transmembrane segment at 898-917 threads the bilayer; that stretch reads TMALSVLVTIEMCNALNSVS. Glutamate 908 is a binding site for Ca(2+). Residues 918–930 lie on the Cytoplasmic side of the membrane; the sequence is ENQSLLRMPPWLN. A helical membrane pass occupies residues 931–949; the sequence is PWLLGAVVMSMALHFLILL. Over 950-964 the chain is Lumenal; sequence VPPLPLIFQVTPLSG. A helical membrane pass occupies residues 965–985; that stretch reads RQWGVVLQMSLPVILLDEALK. Topologically, residues 986-999 are cytoplasmic; it reads YLSRNHMDEKKDLK.

This sequence belongs to the cation transport ATPase (P-type) (TC 3.A.3) family. Type IIA subfamily. As to quaternary structure, interacts with sarcolipin (SLN). Interacts with phospholamban (PLN). Interacts with myoregulin (MRLN). Interacts with DWORF. Interacts with VMP1. Interacts with TUNAR; the interaction occurs at low levels in low glucose conditions and is increased by high glucose levels. Requires Mg(2+) as cofactor.

It localises to the endoplasmic reticulum membrane. The protein localises to the sarcoplasmic reticulum membrane. It catalyses the reaction Ca(2+)(in) + ATP + H2O = Ca(2+)(out) + ADP + phosphate + H(+). Inhibited by sarcolipin (SLN), phospholamban (PLN) and myoregulin (MRLN). Enhanced by DWORF; DWORF increases activity by displacing sarcolipin (SLN), phospholamban (PLN) and myoregulin (MRLN). Functionally, this magnesium-dependent enzyme catalyzes the hydrolysis of ATP coupled with the transport of calcium. Transports calcium ions from the cytosol into the sarcoplasmic/endoplasmic reticulum lumen. Contributes to calcium sequestration involved in muscular excitation/contraction. The sequence is that of Sarcoplasmic/endoplasmic reticulum calcium ATPase 3 (Atp2a3) from Mus musculus (Mouse).